The sequence spans 1381 residues: Protein HEG homolog 1 (1381 aa).

Positions methionine 1 to glycine 29 are cleaved as a signal peptide. Residues proline 24–alanine 108 are disordered. Residues proline 25–proline 37 are compositionally biased toward pro residues. The Extracellular portion of the chain corresponds to threonine 30–leucine 1248. Residues alanine 38–leucine 52 are compositionally biased toward low complexity. The span at glutamine 55–glycine 74 shows a compositional bias: basic and acidic residues. Threonine 67 carries an O-linked (GalNAc...) threonine glycan. Residues arginine 93–alanine 105 show a composition bias toward low complexity. Asparagine 123, asparagine 159, asparagine 180, and asparagine 314 each carry an N-linked (GlcNAc...) asparagine glycan. Over residues aspartate 301–threonine 316 the composition is skewed to low complexity. Disordered regions lie at residues aspartate 301–glutamine 325 and proline 376–alanine 447. Over residues leucine 424–arginine 444 the composition is skewed to polar residues. N-linked (GlcNAc...) asparagine glycans are attached at residues asparagine 462, asparagine 520, and asparagine 610. Residues serine 491–serine 529 form a disordered region. Positions serine 508–serine 522 are enriched in low complexity. Disordered stretches follow at residues serine 612 to serine 680, serine 706 to serine 757, and glutamine 774 to alanine 830. The span at glutamine 620–valine 648 shows a compositional bias: polar residues. Low complexity-rich tracts occupy residues serine 657 to serine 680 and serine 706 to proline 748. Polar residues-rich tracts occupy residues glutamine 774 to proline 784 and glutamate 792 to valine 809. A compositionally biased stretch (low complexity) spans threonine 810–glutamate 825. An EGF-like 1 domain is found at serine 985 to serine 1023. Intrachain disulfides connect cysteine 989–cysteine 1000, cysteine 994–cysteine 1011, cysteine 1013–cysteine 1022, cysteine 1029–cysteine 1040, cysteine 1034–cysteine 1049, and cysteine 1051–cysteine 1062. The region spanning aspartate 1025 to asparagine 1063 is the EGF-like 2; calcium-binding domain. Asparagine 1137 carries an N-linked (GlcNAc...) asparagine glycan. A helical membrane pass occupies residues isoleucine 1249 to isoleucine 1269. At valine 1270–phenylalanine 1381 the chain is on the cytoplasmic side. Residue serine 1359 is modified to Phosphoserine.

Interacts with CCM2 and KRIT1; KRIT1 markedly facilitates interaction with CCM2.

The protein resides in the cell membrane. Its subcellular location is the cell junction. It is found in the secreted. Its function is as follows. Receptor component of the CCM signaling pathway which is a crucial regulator of heart and vessel formation and integrity. May act through the stabilization of endothelial cell junctions. This chain is Protein HEG homolog 1 (HEG1), found in Homo sapiens (Human).